Consider the following 370-residue polypeptide: Lysophosphatidic acid receptor 4 (370 aa).

At Met1–Gly43 the chain is on the extracellular side. N-linked (GlcNAc...) asparagine glycosylation is found at Asn15, Asn24, and Asn28. The helical transmembrane segment at Ala44 to Phe64 threads the bilayer. The Cytoplasmic segment spans residues Cys65 to Glu73. The chain crosses the membrane as a helical span at residues Thr74 to Phe94. Over Lys95–Lys112 the chain is Extracellular. Cys111 and Cys188 are disulfide-bonded. A helical membrane pass occupies residues Ile113–Ser133. Topologically, residues Val134–Ser155 are cytoplasmic. The chain crosses the membrane as a helical span at residues Ala156 to Phe176. The Extracellular segment spans residues Ser177–Lys203. The N-linked (GlcNAc...) asparagine glycan is linked to Asn183. The helical transmembrane segment at Ile204 to Ser224 threads the bilayer. The Cytoplasmic portion of the chain corresponds to Ser225 to His254. A helical membrane pass occupies residues Met255 to Val275. Over Arg276–Pro294 the chain is Extracellular. Residues Ile295–Leu315 form a helical membrane-spanning segment. Topologically, residues Glu316–Phe370 are cytoplasmic.

This sequence belongs to the G-protein coupled receptor 1 family. In terms of tissue distribution, high expression in ovary. Not detected in the brain regions thalamus, putamen, caudate, frontal cortex, pons, hypothalamus and hippocampus.

Its subcellular location is the cell membrane. In terms of biological role, receptor for lysophosphatidic acid (LPA), a mediator of diverse cellular activities. Transduces a signal by increasing the intracellular calcium ions and by stimulating adenylyl cyclase activity. The rank order of potency for agonists of this receptor is 1-oleoyl- &gt; 1-stearoyl- &gt; 1-palmitoyl- &gt; 1-myristoyl- &gt; 1-alkyl- &gt; 1-alkenyl-LPA. The protein is Lysophosphatidic acid receptor 4 (LPAR4) of Homo sapiens (Human).